We begin with the raw amino-acid sequence, 226 residues long: 7-cyano-7-deazaguanine synthase (226 aa).

An ATP-binding site is contributed by 9–19 (YSGGLDSTTCL). Zn(2+) contacts are provided by Cys189, Cys199, Cys202, and Cys205.

It belongs to the QueC family. Zn(2+) is required as a cofactor.

The enzyme catalyses 7-carboxy-7-deazaguanine + NH4(+) + ATP = 7-cyano-7-deazaguanine + ADP + phosphate + H2O + H(+). It functions in the pathway purine metabolism; 7-cyano-7-deazaguanine biosynthesis. In terms of biological role, catalyzes the ATP-dependent conversion of 7-carboxy-7-deazaguanine (CDG) to 7-cyano-7-deazaguanine (preQ(0)). The polypeptide is 7-cyano-7-deazaguanine synthase (Pelobacter propionicus (strain DSM 2379 / NBRC 103807 / OttBd1)).